Consider the following 334-residue polypeptide: UDP-N-acetylglucosamine--N-acetylmuramyl-(pentapeptide) pyrophosphoryl-undecaprenol N-acetylglucosamine transferase (334 aa).

Residues 11–13 (TGG), Asn125, Ser185, Ile229, and Gln274 contribute to the UDP-N-acetyl-alpha-D-glucosamine site.

The protein belongs to the glycosyltransferase 28 family. MurG subfamily.

The protein localises to the cell inner membrane. It catalyses the reaction di-trans,octa-cis-undecaprenyl diphospho-N-acetyl-alpha-D-muramoyl-L-alanyl-D-glutamyl-meso-2,6-diaminopimeloyl-D-alanyl-D-alanine + UDP-N-acetyl-alpha-D-glucosamine = di-trans,octa-cis-undecaprenyl diphospho-[N-acetyl-alpha-D-glucosaminyl-(1-&gt;4)]-N-acetyl-alpha-D-muramoyl-L-alanyl-D-glutamyl-meso-2,6-diaminopimeloyl-D-alanyl-D-alanine + UDP + H(+). The protein operates within cell wall biogenesis; peptidoglycan biosynthesis. Cell wall formation. Catalyzes the transfer of a GlcNAc subunit on undecaprenyl-pyrophosphoryl-MurNAc-pentapeptide (lipid intermediate I) to form undecaprenyl-pyrophosphoryl-MurNAc-(pentapeptide)GlcNAc (lipid intermediate II). In Thermosipho africanus (strain TCF52B), this protein is UDP-N-acetylglucosamine--N-acetylmuramyl-(pentapeptide) pyrophosphoryl-undecaprenol N-acetylglucosamine transferase.